Here is a 69-residue protein sequence, read N- to C-terminus: Large ribosomal subunit protein bL28 (69 aa).

Belongs to the bacterial ribosomal protein bL28 family.

The sequence is that of Large ribosomal subunit protein bL28 from Lawsonia intracellularis (strain PHE/MN1-00).